The sequence spans 215 residues: Redox-sensing transcriptional repressor Rex (215 aa).

Positions 18-57 (LYHRYLKYLDESGKERVSSAELSEAVKVDSATIRRDFSYF) form a DNA-binding region, H-T-H motif. 92–97 (GVGNLG) lines the NAD(+) pocket.

It belongs to the transcriptional regulatory Rex family. Homodimer.

It localises to the cytoplasm. In terms of biological role, modulates transcription in response to changes in cellular NADH/NAD(+) redox state. This chain is Redox-sensing transcriptional repressor Rex, found in Listeria innocua serovar 6a (strain ATCC BAA-680 / CLIP 11262).